The primary structure comprises 352 residues: Glycerol-1-phosphate dehydrogenase [NAD(P)+] (352 aa).

NAD(+)-binding positions include 98–102 (GKAID) and 120–123 (TAAS). Residue D125 coordinates substrate. Residue S129 coordinates NAD(+). Residue D172 participates in substrate binding. Residues D172 and H252 each coordinate Zn(2+). H256 is a binding site for substrate. Zn(2+) is bound at residue H268.

This sequence belongs to the glycerol-1-phosphate dehydrogenase family. Requires Zn(2+) as cofactor.

The protein resides in the cytoplasm. It catalyses the reaction sn-glycerol 1-phosphate + NAD(+) = dihydroxyacetone phosphate + NADH + H(+). The enzyme catalyses sn-glycerol 1-phosphate + NADP(+) = dihydroxyacetone phosphate + NADPH + H(+). Its pathway is membrane lipid metabolism; glycerophospholipid metabolism. Catalyzes the NAD(P)H-dependent reduction of dihydroxyacetonephosphate (DHAP or glycerone phosphate) to glycerol 1-phosphate (G1P). The G1P thus generated is used as the glycerophosphate backbone of phospholipids in the cellular membranes of Archaea. This chain is Glycerol-1-phosphate dehydrogenase [NAD(P)+], found in Halobacterium salinarum (strain ATCC 29341 / DSM 671 / R1).